We begin with the raw amino-acid sequence, 435 residues long: D-amino acid dehydrogenase (435 aa).

3–17 (VLILGSGVIGTTSAW) provides a ligand contact to FAD.

This sequence belongs to the DadA oxidoreductase family. FAD is required as a cofactor.

The catalysed reaction is a D-alpha-amino acid + A + H2O = a 2-oxocarboxylate + AH2 + NH4(+). It functions in the pathway amino-acid degradation; D-alanine degradation; NH(3) and pyruvate from D-alanine: step 1/1. Functionally, oxidative deamination of D-amino acids. In Xylella fastidiosa (strain M23), this protein is D-amino acid dehydrogenase.